Reading from the N-terminus, the 289-residue chain is Carbonyl reductase [NADPH] 1 (289 aa).

An N-acetylserine modification is found at S2. S2 carries the phosphoserine modification. NADP(+) is bound by residues 10–34, 63–64, and N90; these read VTGANKGIGFAIVRDLCRQFAGDVV and DI. Glutathione-binding positions include 95–97 and Q106; that span reads FQL. Substrate is bound at residue S140. Glutathione is bound at residue 193–194; it reads TY. Y194 (proton acceptor) is an active-site residue. NADP(+)-binding positions include 194 to 198 and 231 to 233; these read YGVTK and VRT. Position 239 is an N6-1-carboxyethyl lysine (K239).

The protein belongs to the short-chain dehydrogenases/reductases (SDR) family. As to quaternary structure, monomer. Expressed in kidney (at protein level).

The protein localises to the cytoplasm. It carries out the reaction a secondary alcohol + NADP(+) = a ketone + NADPH + H(+). The catalysed reaction is prostaglandin E1 + NADP(+) = 15-oxoprostaglandin E1 + NADPH + H(+). The enzyme catalyses prostaglandin F2alpha + NADP(+) = prostaglandin E2 + NADPH + H(+). It catalyses the reaction prostaglandin D2 + NADP(+) = 15-oxoprostaglandin D2 + NADPH + H(+). It carries out the reaction prostaglandin E2 + NADP(+) = 15-oxoprostaglandin E2 + NADPH + H(+). The catalysed reaction is prostaglandin F2alpha + NADP(+) = 15-oxoprostaglandin F2alpha + NADPH + H(+). The enzyme catalyses menadione + NADPH + H(+) = menadiol + NADP(+). It catalyses the reaction daunorubicin + NADPH + H(+) = 13-dihydrodaunorubicin + NADP(+). It carries out the reaction S-nitrosoglutathione + NADPH + H(+) = S-(hydroxysulfenamide)glutathione + NADP(+). The catalysed reaction is a primary alcohol + NADP(+) = an aldehyde + NADPH + H(+). The enzyme catalyses cortisol + NADPH + H(+) = 20beta-dihydrocortisol + NADP(+). It catalyses the reaction corticosterone + NADPH + H(+) = 20beta-dihydrocorticosterone + NADP(+). Its function is as follows. NADPH-dependent reductase with broad substrate specificity. Catalyzes the reduction of a wide variety of carbonyl compounds including quinones, prostaglandins, menadione, plus various xenobiotics. Catalyzes the reduction of the antitumor anthracyclines doxorubicin and daunorubicin to the cardiotoxic compounds doxorubicinol and daunorubicinol. Can convert prostaglandin E2 to prostaglandin F2-alpha. Can bind glutathione, which explains its higher affinity for glutathione-conjugated substrates. Catalyzes the reduction of S-nitrosoglutathione. In addition, participates in the glucocorticoid metabolism by catalyzing the NADPH-dependent cortisol/corticosterone into 20beta-dihydrocortisol (20b-DHF) or 20beta-corticosterone (20b-DHB), which are weak agonists of NR3C1 and NR3C2 in adipose tissue. This Sus scrofa (Pig) protein is Carbonyl reductase [NADPH] 1.